Here is a 266-residue protein sequence, read N- to C-terminus: 3-methyl-2-oxobutanoate hydroxymethyltransferase (266 aa).

2 residues coordinate Mg(2+): Asp43 and Asp82. 3-methyl-2-oxobutanoate is bound by residues Asp43 to Ser44, Asp82, and Lys110. A Mg(2+)-binding site is contributed by Glu112. Catalysis depends on Glu179, which acts as the Proton acceptor.

It belongs to the PanB family. Homodecamer; pentamer of dimers. Requires Mg(2+) as cofactor.

It is found in the cytoplasm. The catalysed reaction is 3-methyl-2-oxobutanoate + (6R)-5,10-methylene-5,6,7,8-tetrahydrofolate + H2O = 2-dehydropantoate + (6S)-5,6,7,8-tetrahydrofolate. It participates in cofactor biosynthesis; (R)-pantothenate biosynthesis; (R)-pantoate from 3-methyl-2-oxobutanoate: step 1/2. In terms of biological role, catalyzes the reversible reaction in which hydroxymethyl group from 5,10-methylenetetrahydrofolate is transferred onto alpha-ketoisovalerate to form ketopantoate. The sequence is that of 3-methyl-2-oxobutanoate hydroxymethyltransferase from Psychrobacter cryohalolentis (strain ATCC BAA-1226 / DSM 17306 / VKM B-2378 / K5).